The sequence spans 466 residues: Na(+)/H(+) antiporter NhaA (466 aa).

Helical transmembrane passes span Val-32–Ala-52, Leu-74–Ile-94, Ala-111–Leu-131, Gly-142–Gly-162, Phe-172–Phe-192, Asp-195–Leu-215, Gly-221–Ile-241, Gly-280–Leu-300, Leu-310–Leu-330, Val-348–Leu-368, and Glu-379–Leu-399.

This sequence belongs to the NhaA Na(+)/H(+) (TC 2.A.33) antiporter family.

It is found in the cell membrane. The catalysed reaction is Na(+)(in) + 2 H(+)(out) = Na(+)(out) + 2 H(+)(in). Functionally, na(+)/H(+) antiporter that extrudes sodium in exchange for external protons. This chain is Na(+)/H(+) antiporter NhaA, found in Streptomyces avermitilis (strain ATCC 31267 / DSM 46492 / JCM 5070 / NBRC 14893 / NCIMB 12804 / NRRL 8165 / MA-4680).